The sequence spans 227 residues: 6,7-dimethyl-8-ribityllumazine synthase, chloroplastic (227 aa).

Residues 1-71 constitute a chloroplast transit peptide; it reads MKSLASPPCL…LRSSFVQTAA (71 aa). 5-amino-6-(D-ribitylamino)uracil-binding positions include phenylalanine 94, 128–130, and 152–154; these read SFE and AVI. 157-158 contributes to the (2S)-2-hydroxy-3-oxobutyl phosphate binding site; the sequence is DT. Histidine 160 (proton donor) is an active-site residue. Phenylalanine 185 contacts 5-amino-6-(D-ribitylamino)uracil. Arginine 199 is a binding site for (2S)-2-hydroxy-3-oxobutyl phosphate.

This sequence belongs to the DMRL synthase family. As to quaternary structure, oligomer forming an icosahedral capsid.

Its subcellular location is the plastid. It is found in the chloroplast. It catalyses the reaction (2S)-2-hydroxy-3-oxobutyl phosphate + 5-amino-6-(D-ribitylamino)uracil = 6,7-dimethyl-8-(1-D-ribityl)lumazine + phosphate + 2 H2O + H(+). The protein operates within cofactor biosynthesis; riboflavin biosynthesis; riboflavin from 2-hydroxy-3-oxobutyl phosphate and 5-amino-6-(D-ribitylamino)uracil: step 1/2. Catalyzes the formation of 6,7-dimethyl-8-ribityllumazine by condensation of 5-amino-6-(D-ribitylamino)uracil with 3,4-dihydroxy-2-butanone 4-phosphate. This is the penultimate step in the biosynthesis of riboflavin. This is 6,7-dimethyl-8-ribityllumazine synthase, chloroplastic from Arabidopsis thaliana (Mouse-ear cress).